A 131-amino-acid chain; its full sequence is Large ribosomal subunit protein bL19 (131 aa).

Residues 112-131 (KSARIAERAGGPKASASTEA) form a disordered region.

Belongs to the bacterial ribosomal protein bL19 family.

Its function is as follows. This protein is located at the 30S-50S ribosomal subunit interface and may play a role in the structure and function of the aminoacyl-tRNA binding site. The protein is Large ribosomal subunit protein bL19 of Caulobacter vibrioides (strain ATCC 19089 / CIP 103742 / CB 15) (Caulobacter crescentus).